Reading from the N-terminus, the 222-residue chain is Chromatin-associated protein SWI6 (222 aa).

Over residues 1-15 (MPVIKKEELSQKKDL) the composition is skewed to basic and acidic residues. 2 disordered regions span residues 1–26 (MPVIKKEELSQKKDLESEEEDSGLED) and 77–147 (ETQD…DRQY). Residues 16–26 (ESEEEDSGLED) are compositionally biased toward acidic residues. The 60-residue stretch at 28 to 87 (YEVEKVIKHRGKGKNIEFLVRWKGYGPEYDTWEPTENVASAEEAVAAYWETQDKTATAPR) folds into the Chromo domain.

As to quaternary structure, interacts with DMT5.

The protein resides in the nucleus. Recognizes and binds histone H3 tails methylated at 'Lys-9', leading to epigenetic repression. Localizes DMT5 to heterochromatin characterized by trimethylation of histone H3 tails at 'Lys-9'. The protein is Chromatin-associated protein SWI6 of Cryptococcus neoformans var. grubii serotype A (strain H99 / ATCC 208821 / CBS 10515 / FGSC 9487) (Filobasidiella neoformans var. grubii).